The following is a 309-amino-acid chain: Tagatose-6-phosphate kinase (309 aa).

It belongs to the carbohydrate kinase PfkB family. LacC subfamily.

The enzyme catalyses D-tagatofuranose 6-phosphate + ATP = D-tagatofuranose 1,6-bisphosphate + ADP + H(+). Its pathway is carbohydrate metabolism; D-tagatose 6-phosphate degradation; D-glyceraldehyde 3-phosphate and glycerone phosphate from D-tagatose 6-phosphate: step 1/2. The polypeptide is Tagatose-6-phosphate kinase (Streptococcus pyogenes serotype M3 (strain SSI-1)).